Reading from the N-terminus, the 433-residue chain is 3-phosphoshikimate 1-carboxyvinyltransferase (433 aa).

3 residues coordinate 3-phosphoshikimate: K21, S22, and R26. Position 21 (K21) interacts with phosphoenolpyruvate. Phosphoenolpyruvate-binding residues include G96 and R124. Positions 167, 168, 169, 195, 310, and 337 each coordinate 3-phosphoshikimate. Phosphoenolpyruvate is bound at residue Q169. Residue D310 is the Proton acceptor of the active site. Residues R341, R384, and K410 each contribute to the phosphoenolpyruvate site.

It belongs to the EPSP synthase family. As to quaternary structure, monomer.

It is found in the cytoplasm. The enzyme catalyses 3-phosphoshikimate + phosphoenolpyruvate = 5-O-(1-carboxyvinyl)-3-phosphoshikimate + phosphate. The protein operates within metabolic intermediate biosynthesis; chorismate biosynthesis; chorismate from D-erythrose 4-phosphate and phosphoenolpyruvate: step 6/7. Its function is as follows. Catalyzes the transfer of the enolpyruvyl moiety of phosphoenolpyruvate (PEP) to the 5-hydroxyl of shikimate-3-phosphate (S3P) to produce enolpyruvyl shikimate-3-phosphate and inorganic phosphate. In Clostridium botulinum (strain Alaska E43 / Type E3), this protein is 3-phosphoshikimate 1-carboxyvinyltransferase.